The primary structure comprises 399 residues: MKDYNMIDSHTRRFDSTTNPTILKVIGAGGGGSNAVNRMIEYGVRDVEFIVANTDLQALQTSIAPIKIALGAKVTAGLGAGGKPEIGQAAAEEDIDVIRNHLSGADMVFITAGMGGGTGTGAAPVIAQVAKELGILTVGVVTKPFKFEGPKKLRLAEQGINNLRKSVDTLIIIPNQKLLTVVDKRTTIKDAFKRADDVLRMGVQGIAGLIIEHGEVNIDFADVKSIMQGQGDALMGIGYGKGENRAVDAATSAISNPLLEEVRIEGSKGLLVNVTGGDDFSLLELEEIMGIITVSVDDEATVIYGHAINSNLEDEIYVTVVATGFASKKQKEISSTPENNTLSSKEFDTLMSGNQNAPSGSYEQQDSSFAAKSKNVNYFDDDIDVPTFLRNLNKKSSDD.

GTP contacts are provided by residues 30-34 (GGGSN), 117-119 (GTG), glutamate 148, lysine 152, and aspartate 196. The disordered stretch occupies residues 349-368 (TLMSGNQNAPSGSYEQQDSS). Positions 351–368 (MSGNQNAPSGSYEQQDSS) are enriched in polar residues.

Belongs to the FtsZ family. As to quaternary structure, homodimer. Polymerizes to form a dynamic ring structure in a strictly GTP-dependent manner. Interacts directly with several other division proteins.

It is found in the cytoplasm. Essential cell division protein that forms a contractile ring structure (Z ring) at the future cell division site. The regulation of the ring assembly controls the timing and the location of cell division. One of the functions of the FtsZ ring is to recruit other cell division proteins to the septum to produce a new cell wall between the dividing cells. Binds GTP and shows GTPase activity. This is Cell division protein FtsZ from Borreliella burgdorferi (strain ATCC 35210 / DSM 4680 / CIP 102532 / B31) (Borrelia burgdorferi).